The chain runs to 179 residues: Inosine/xanthosine triphosphatase (179 aa).

Substrate is bound by residues 8-13 and 68-69; these read TTNPAK and EA. Glu68 is a Mg(2+) binding site.

The protein belongs to the YjjX NTPase family. As to quaternary structure, homodimer. It depends on Mg(2+) as a cofactor. Mn(2+) serves as cofactor.

It carries out the reaction XTP + H2O = XDP + phosphate + H(+). It catalyses the reaction ITP + H2O = IDP + phosphate + H(+). Phosphatase that hydrolyzes non-canonical purine nucleotides such as XTP and ITP to their respective diphosphate derivatives. Probably excludes non-canonical purines from DNA/RNA precursor pool, thus preventing their incorporation into DNA/RNA and avoiding chromosomal lesions. This Serratia proteamaculans (strain 568) protein is Inosine/xanthosine triphosphatase.